The primary structure comprises 64 residues: DNA gyrase inhibitor YacG (64 aa).

Residues cysteine 9, cysteine 12, cysteine 28, and cysteine 32 each contribute to the Zn(2+) site. A disordered region spans residues 45–64 (KRIPSSGDLSESDDWSEEPK). A compositionally biased stretch (acidic residues) spans 54-64 (SESDDWSEEPK).

It belongs to the DNA gyrase inhibitor YacG family. As to quaternary structure, interacts with GyrB. Zn(2+) serves as cofactor.

In terms of biological role, inhibits all the catalytic activities of DNA gyrase by preventing its interaction with DNA. Acts by binding directly to the C-terminal domain of GyrB, which probably disrupts DNA binding by the gyrase. The sequence is that of DNA gyrase inhibitor YacG from Escherichia fergusonii (strain ATCC 35469 / DSM 13698 / CCUG 18766 / IAM 14443 / JCM 21226 / LMG 7866 / NBRC 102419 / NCTC 12128 / CDC 0568-73).